Here is a 530-residue protein sequence, read N- to C-terminus: Tryptophan 7-halogenase RebH (530 aa).

Residues G13, T15, A16, A39, D41, E49, and A50 each contribute to the FAD site. K79 is an active-site residue. Positions 197 and 348 each coordinate FAD. Position 357 (E357) interacts with L-tryptophan. Chloride-binding residues include T359 and G360. I361 lines the FAD pocket. 4 residues coordinate L-tryptophan: Y454, Y455, E461, and F465.

The protein belongs to the flavin-dependent halogenase family. Bacterial tryptophan halogenase subfamily. As to quaternary structure, homodimer.

It carries out the reaction L-tryptophan + FADH2 + chloride + O2 = 7-chloro-L-tryptophan + FAD + 2 H2O. Its function is as follows. Involved in the biosynthesis of the indolocarbazole antitumor agent rebeccamycin. Catalyzes the chlorination of tryptophan (Trp) at C7 position to yield 7-chlorotryptophan. It is also able to use bromide ions to generate monobrominated Trp. The chain is Tryptophan 7-halogenase RebH (rebH) from Lentzea aerocolonigenes (Lechevalieria aerocolonigenes).